The sequence spans 538 residues: Atos homolog protein B (538 aa).

The segment covering 1–18 (MRHVQAEPSPSSEPEAGP) has biased composition (low complexity). Disordered stretches follow at residues 1-103 (MRHV…GLLG), 156-185 (HTRDWASPDPGGHGSLGESPGPAPPGQLHT), and 197-308 (GGKS…PMGR). Positions 227–238 (HTPPGPGPPGPC) are enriched in pro residues. Phosphoserine is present on residues serine 254 and serine 255. Polar residues predominate over residues 274 to 286 (AANSSDAKATSFW). The segment at 348–430 (LLGNFEESLL…VPKVGTVQVT (83 aa)) is required for macropage invasion. The interval 436-444 (QTVVKMFLV) is transactivation domain 1 (TAD1).

Belongs to the ATOS family.

Its subcellular location is the nucleus. Its function is as follows. Transcription regulator that may syncronize transcriptional and translational programs. The polypeptide is Atos homolog protein B (Macaca fascicularis (Crab-eating macaque)).